The chain runs to 320 residues: Malate dehydrogenase (320 aa).

Residues 10–15 and Asp34 contribute to the NAD(+) site; that span reads GAGNIG. Residues Arg83 and Arg89 each coordinate substrate. NAD(+)-binding positions include Asn96 and 119-121; that span reads ITN. Substrate contacts are provided by Asn121 and Arg152. The active-site Proton acceptor is the His176.

Belongs to the LDH/MDH superfamily. MDH type 3 family.

It catalyses the reaction (S)-malate + NAD(+) = oxaloacetate + NADH + H(+). Catalyzes the reversible oxidation of malate to oxaloacetate. The sequence is that of Malate dehydrogenase from Rhizorhabdus wittichii (strain DSM 6014 / CCUG 31198 / JCM 15750 / NBRC 105917 / EY 4224 / RW1) (Sphingomonas wittichii).